A 199-amino-acid chain; its full sequence is Protein CPL1 (199 aa).

The first 30 residues, 1-30 (MFSIPPSVRRLVFLFLIAAPLLSIVLPVAA), serve as a signal peptide directing secretion. The tract at residues 34-58 (GVDPPSKLQPRAPQPSRRMGATKRS) is disordered. Asn-148 carries N-linked (GlcNAc...) asparagine glycosylation.

It localises to the secreted. Functionally, virulence factor which promotes fungal virulence by enhancing type 2 inflammation in the mouse host. Likely binds mouse Tlr4 independently of Ly96/Md2 and activates Tlr4 signaling to drive Stat3 phosphorylation in interstitial macrophages, which promotes the initial induction of Arg1/arginase-1 and increases macrophage sensitivity to Il4 signaling. This chain is Protein CPL1, found in Cryptococcus neoformans var. grubii serotype A (strain H99 / ATCC 208821 / CBS 10515 / FGSC 9487) (Filobasidiella neoformans var. grubii).